Reading from the N-terminus, the 61-residue chain is Small ribosomal subunit protein uS14 (61 aa).

Residues C24, C27, C40, and C43 each contribute to the Zn(2+) site.

It belongs to the universal ribosomal protein uS14 family. Zinc-binding uS14 subfamily. Part of the 30S ribosomal subunit. Contacts proteins S3 and S10. It depends on Zn(2+) as a cofactor.

Binds 16S rRNA, required for the assembly of 30S particles and may also be responsible for determining the conformation of the 16S rRNA at the A site. This is Small ribosomal subunit protein uS14 from Thermodesulfovibrio yellowstonii (strain ATCC 51303 / DSM 11347 / YP87).